A 307-amino-acid polypeptide reads, in one-letter code: N-myc-interactor (307 aa).

Residues 1-24 (MEADKDDTQQILKEHSPDEFIKDE) form a disordered region. The residue at position 16 (Ser-16) is a Phosphoserine. Lys-22 participates in a covalent cross-link: Glycyl lysine isopeptide (Lys-Gly) (interchain with G-Cter in ubiquitin). A coiled-coil region spans residues 30–64 (IDEITKKNIQLKKEIQKLETELQEATKEFQIKEDI). NID domains are found at residues 103–192 (GQAL…GEVD) and 201–292 (GSAV…EVDV).

This sequence belongs to the NMI family. In terms of assembly, interacts with MYCN and MYC, as well as with other transcription factors with a Zip, HLH or a HLH-Zip motif. Interacts with all STAT proteins except STAT2. Interacts with IRF7, the interaction is direct and leads to the inhibition of IRF7-mediated type I IFN production. Interacts (via coiled-coil domain) with TRIM21 (via the SPRY domain); the interaction leads to 'Lys-63'-linked ubiquitination of NMI. Interacts with IFI35; the interaction is direct and is facilitated by TRIM21. Interacts with TLR4; the interaction is direct and leads to NF-kappa-B activation. As to quaternary structure, (Microbial infection) Interacts with human cytomegalovirus protein UL23; this interaction inhibits NMI-mediated transcription of interferon-gamma stimulated genes. In terms of processing, ubiquitinated. 'Lys-63'-linked ubiquitination by TRIM21 promotes interaction with IFI35 and inhibits virus-triggered type I IFN-beta production. In terms of tissue distribution, expressed in adult spleen, liver, and kidney. Expressed in fetal thymus, liver, placenta, spleen, lung, and kidney but not brain. Expressed in macrophages.

The protein resides in the cytoplasm. It is found in the nucleus. The protein localises to the secreted. Acts as a signaling pathway regulator involved in innate immune system response. In response to interleukin 2/IL2 and interferon IFN-gamma/IFNG, interacts with signal transducer and activator of transcription/STAT which activate the transcription of downstream genes involved in a multitude of signals for development and homeostasis. Enhances the recruitment of CBP/p300 coactivators to STAT1 and STAT5, resulting in increased STAT1- and STAT5-dependent transcription. In response to interferon IFN-alpha, associates in a complex with signaling pathway regulator IFI35 to regulate immune response; the complex formation prevents proteasome-mediated degradation of IFI35. In complex with IFI35, inhibits virus-triggered type I IFN-beta production when ubiquitinated by ubiquitin-protein ligase TRIM21. In complex with IFI35, negatively regulates nuclear factor NF-kappa-B signaling by inhibiting the nuclear translocation, activation and transcription of NF-kappa-B subunit p65/RELA, resulting in the inhibition of endothelial cell proliferation, migration and re-endothelialization of injured arteries. Negatively regulates virus-triggered type I interferon/IFN production by inducing proteosome-dependent degradation of IRF7, a transcriptional regulator of type I IFN, thereby interfering with cellular antiviral responses. Beside its role as an intracellular signaling pathway regulator, also functions extracellularly as damage-associated molecular patterns (DAMPs) to promote inflammation, when actively released by macrophage to the extracellular space during cell injury or pathogen invasion. Macrophage-secreted NMI activates NF-kappa-B signaling in adjacent macrophages through Toll-like receptor 4/TLR4 binding and activation, thereby inducing NF-kappa-B translocation from the cytoplasm into the nucleus which promotes the release of pro-inflammatory cytokines. The sequence is that of N-myc-interactor from Homo sapiens (Human).